Reading from the N-terminus, the 345-residue chain is MAESCRVRRIKLGSQGLEVSAQGLGCMGLTGHYGASKPETEAIALIHHAIHSGVTFLDTSDMYGPETNEILLGKALKDGVREKVELATKFGISYAEGNREIKGDPAYVRAACEASLKRLDVTCIDLYYQHRIDTRVPIEITMGELKKLIEEGKIKYIGLSEASASTIRRAHTVHPITAVQLEWSLWTRDVEEEIVPTCRELGIGIVSYSPLGRGFFASGPKLVENLDNNDFRKALPRFQQENLDHNKILYEKVSAMSEKKGCTPAQLALAWVHHQGDDVCPIPGTTKIENLNQNIRALSVKLTPEEMSELETIAQPESVKGERYMATVPTFKNSDTPPLSSWNAV.

Tyr63 (proton donor) is an active-site residue. Substrate is bound at residue His130. 209–219 (SPLGRGFFASG) contacts NADP(+).

The protein belongs to the aldo/keto reductase family.

The polypeptide is Probable aldo-keto reductase 3 (Arabidopsis thaliana (Mouse-ear cress)).